The sequence spans 798 residues: uncharacterized protein (798 aa).

The interval lysine 432–valine 573 is disordered. 4 stretches are compositionally biased toward low complexity: residues serine 438–threonine 449, arginine 456–asparagine 465, serine 473–proline 487, and serine 495–tyrosine 510. Positions proline 519–isoleucine 529 are enriched in polar residues. Over residues glutamate 535–valine 547 the composition is skewed to low complexity. The segment covering aspartate 548 to proline 562 has biased composition (basic and acidic residues). Residues arginine 563–arginine 572 are compositionally biased toward basic residues.

Its subcellular location is the virion. This is an uncharacterized protein from Acanthamoeba polyphaga (Amoeba).